A 473-amino-acid chain; its full sequence is Anthocyanidin-3-O-glucoside rhamnosyltransferase (473 aa).

This sequence belongs to the UDP-glycosyltransferase family. Expressed in petals, styles and anthers.

The protein operates within pigment biosynthesis; anthocyanin biosynthesis. Its function is as follows. Controls the rhamnosylation of reddish anthocyanidin-3-O-glucosides, which is the first step in a series of modifications that finally yield magenta or blue/purple coloured anthocyanins. Controls the conversion of anthocyanidin-3-O-glucosides to anthocyanidin-3-O-rutinosides. The sequence is that of Anthocyanidin-3-O-glucoside rhamnosyltransferase from Petunia hybrida (Petunia).